Consider the following 185-residue polypeptide: Lysozyme g (185 aa).

Residue glutamine 1 is modified to Pyrrolidone carboxylic acid. Intrachain disulfides connect cysteine 4–cysteine 60 and cysteine 18–cysteine 29. Residues glutamate 73 and aspartate 86 contribute to the active site.

The protein belongs to the glycosyl hydrolase 23 family.

It localises to the secreted. It catalyses the reaction Hydrolysis of (1-&gt;4)-beta-linkages between N-acetylmuramic acid and N-acetyl-D-glucosamine residues in a peptidoglycan and between N-acetyl-D-glucosamine residues in chitodextrins.. The polypeptide is Lysozyme g (Casuarius casuarius (Southern cassowary)).